A 325-amino-acid polypeptide reads, in one-letter code: Cytochrome c biogenesis protein CcsA (325 aa).

8 consecutive transmembrane segments (helical) span residues 12–32, 45–65, 72–92, 100–120, 145–165, 231–251, 264–281, and 293–313; these read HISFSVVSILISIHLITLLFV, GMIITFFCITGLLVTRWVFSG, LYESLIFLSWTFSIFYMVPYF, LNTIITPSVIFTQGFATSGLL, MILGYATLLCGSLLSVAILVI, TISLGFIFLTIGIISGAVWAN, ETWAFITWTIFAIYLHTR, and IVASIGFLIIWVCYLGINLLG.

This sequence belongs to the CcmF/CycK/Ccl1/NrfE/CcsA family. As to quaternary structure, may interact with Ccs1.

The protein localises to the plastid. It is found in the chloroplast thylakoid membrane. In terms of biological role, required during biogenesis of c-type cytochromes (cytochrome c6 and cytochrome f) at the step of heme attachment. The chain is Cytochrome c biogenesis protein CcsA from Glycine max (Soybean).